We begin with the raw amino-acid sequence, 154 residues long: uncharacterized protein (154 aa).

The disordered stretch occupies residues 91–154 (PSEESWGCRQ…WGSPQPSRGA (64 aa)). Over residues 134 to 154 (SRDTSPLGGQSWGSPQPSRGA) the composition is skewed to polar residues.

This is an uncharacterized protein from Homo sapiens (Human).